The following is a 708-amino-acid chain: Metal-pseudopaline receptor CntO (708 aa).

The N-terminal stretch at 1–21 (MRVSVSLVLGVGLGCSSPALW) is a signal peptide. The region spanning 63 to 169 (RIEDIPQAIS…PGGTVNLVTK (107 aa)) is the TBDR plug domain. The region spanning 174–708 (ERFARLHASA…NLTMSLTLNY (535 aa)) is the TBDR beta-barrel domain.

Belongs to the TonB-dependent receptor family.

Its subcellular location is the cell outer membrane. Transports the metallophore pseudopaline, which is involved in the acquisition of nickel and zinc, and thus enables bacterial growth inside the host, where metal access is limited. Is probably involved in the import of pseudopaline-metal complexes. The protein is Metal-pseudopaline receptor CntO of Pseudomonas aeruginosa (strain ATCC 15692 / DSM 22644 / CIP 104116 / JCM 14847 / LMG 12228 / 1C / PRS 101 / PAO1).